The sequence spans 64 residues: MPKMKSHSGASKRFKVSGKGKLLRQQANRRHLLEHKPSRRTRRLDGTEVVAAADVRRVKKLLGR.

The tract at residues 1 to 41 (MPKMKSHSGASKRFKVSGKGKLLRQQANRRHLLEHKPSRRT) is disordered.

This sequence belongs to the bacterial ribosomal protein bL35 family.

The sequence is that of Large ribosomal subunit protein bL35 from Nocardia farcinica (strain IFM 10152).